Reading from the N-terminus, the 307-residue chain is DNA damage tolerance protein rad31 (307 aa).

In terms of biological role, could be involved in a ubiquitin-related process important for DNA damage tolerance. Acts in a process which is defective in the checkpoint rad mutants and which involves hus5. The polypeptide is DNA damage tolerance protein rad31 (rad31) (Schizosaccharomyces pombe (strain 972 / ATCC 24843) (Fission yeast)).